Reading from the N-terminus, the 332-residue chain is DNA-directed RNA polymerase subunit alpha (332 aa).

Residues 1–231 (MQTNLLKPKT…EQLAVFAQLD (231 aa)) form an alpha N-terminal domain (alpha-NTD) region. Positions 252 to 332 (FDPILLRPVD…NWPPAGLEKR (81 aa)) are alpha C-terminal domain (alpha-CTD).

This sequence belongs to the RNA polymerase alpha chain family. In terms of assembly, homodimer. The RNAP catalytic core consists of 2 alpha, 1 beta, 1 beta' and 1 omega subunit. When a sigma factor is associated with the core the holoenzyme is formed, which can initiate transcription.

It carries out the reaction RNA(n) + a ribonucleoside 5'-triphosphate = RNA(n+1) + diphosphate. Its function is as follows. DNA-dependent RNA polymerase catalyzes the transcription of DNA into RNA using the four ribonucleoside triphosphates as substrates. This chain is DNA-directed RNA polymerase subunit alpha, found in Delftia acidovorans (strain DSM 14801 / SPH-1).